Reading from the N-terminus, the 198-residue chain is GTP cyclohydrolase-2 (198 aa).

52–56 lines the GTP pocket; that stretch reads RMHSE. Zn(2+)-binding residues include Cys57, Cys68, and Cys70. GTP-binding positions include Gln73, 94–96, and Thr116; that span reads EGR. The active-site Proton acceptor is the Asp128. Arg130 functions as the Nucleophile in the catalytic mechanism. The GTP site is built by Thr151 and Lys156.

Belongs to the GTP cyclohydrolase II family. Zn(2+) is required as a cofactor.

It carries out the reaction GTP + 4 H2O = 2,5-diamino-6-hydroxy-4-(5-phosphoribosylamino)-pyrimidine + formate + 2 phosphate + 3 H(+). It participates in cofactor biosynthesis; riboflavin biosynthesis; 5-amino-6-(D-ribitylamino)uracil from GTP: step 1/4. Functionally, catalyzes the conversion of GTP to 2,5-diamino-6-ribosylamino-4(3H)-pyrimidinone 5'-phosphate (DARP), formate and pyrophosphate. This is GTP cyclohydrolase-2 from Vibrio parahaemolyticus serotype O3:K6 (strain RIMD 2210633).